Reading from the N-terminus, the 433-residue chain is Protein FAM98B (433 aa).

A disordered region spans residues 303-433 (GRVPDRGGRP…GGGGGGYRRY (131 aa)). Residues 305–314 (VPDRGGRPNE) are compositionally biased toward basic and acidic residues. Over residues 331–433 (GGGGRGGWGG…GGGGGGYRRY (103 aa)) the composition is skewed to gly residues.

The protein belongs to the FAM98 family. Homodimer. Component of the tRNA-splicing ligase complex. Interacts with FAM98A. As to expression, expressed strongly in colorectal cancer tissues compared to wild-type colon samples (at protein level). Expressed strongly in colorectal cancer tissues compared to wild-type colon samples.

It is found in the nucleus. It localises to the cytoplasm. Functionally, positively stimulates PRMT1-induced protein arginine dimethylated arginine methylation. The polypeptide is Protein FAM98B (FAM98B) (Homo sapiens (Human)).